Reading from the N-terminus, the 253-residue chain is Indole-3-glycerol phosphate synthase (253 aa).

It belongs to the TrpC family.

It catalyses the reaction 1-(2-carboxyphenylamino)-1-deoxy-D-ribulose 5-phosphate + H(+) = (1S,2R)-1-C-(indol-3-yl)glycerol 3-phosphate + CO2 + H2O. The protein operates within amino-acid biosynthesis; L-tryptophan biosynthesis; L-tryptophan from chorismate: step 4/5. In Petrotoga mobilis (strain DSM 10674 / SJ95), this protein is Indole-3-glycerol phosphate synthase.